The sequence spans 748 residues: Bifunctional lysine-specific demethylase and histidyl-hydroxylase NO66 (748 aa).

2 disordered regions span residues 65-135 (NIDR…RSTY) and 160-264 (TEVV…DDEG). Positions 94 to 110 (LENKKPKVEVKKEDEKS) are enriched in basic and acidic residues. Polar residues predominate over residues 124-134 (LVQNETSTRST). The span at 163 to 193 (VESDDEQMIGLDSDEELEDEDETDIDEDEMM) shows a compositional bias: acidic residues. Residues 194–203 (IDPKDIERYI) are compositionally biased toward basic and acidic residues. Residues 207–264 (SVEDEEDMEDEEIEDEEFEDEEFEDEEEEADEQEEEEEDVSDEESVVSEMDADSDDEG) show a composition bias toward acidic residues. The 145-residue stretch at 399-543 (QLVNPQTYDD…NLMEKVVPEA (145 aa)) folds into the JmjC domain. Fe cation contacts are provided by H442, D444, and H509.

Belongs to the ROX family. NO66 subfamily. The cofactor is Fe(2+).

It localises to the nucleus. It catalyses the reaction N(6),N(6)-dimethyl-L-lysyl(36)-[histone H3] + 2 2-oxoglutarate + 2 O2 = L-lysyl(36)-[histone H3] + 2 formaldehyde + 2 succinate + 2 CO2. In terms of biological role, oxygenase that can act as both a histone lysine demethylase and a ribosomal histidine hydroxylase. Specifically demethylates 'Lys-4' (H3K4me) and 'Lys-36' (H3K36me) of histone H3, thereby playing a central role in histone code. Mediates response to multiple stress stimuli, including heat shock and osmotic, oxidative, and ethanol stress. The protein is Bifunctional lysine-specific demethylase and histidyl-hydroxylase NO66 (jmjc-1) of Caenorhabditis elegans.